The primary structure comprises 358 residues: Anhydro-N-acetylmuramic acid kinase (358 aa).

Position 9–16 (G9–D16) interacts with ATP.

Belongs to the anhydro-N-acetylmuramic acid kinase family.

The catalysed reaction is 1,6-anhydro-N-acetyl-beta-muramate + ATP + H2O = N-acetyl-D-muramate 6-phosphate + ADP + H(+). It participates in amino-sugar metabolism; 1,6-anhydro-N-acetylmuramate degradation. The protein operates within cell wall biogenesis; peptidoglycan recycling. Functionally, catalyzes the specific phosphorylation of 1,6-anhydro-N-acetylmuramic acid (anhMurNAc) with the simultaneous cleavage of the 1,6-anhydro ring, generating MurNAc-6-P. Is required for the utilization of anhMurNAc either imported from the medium or derived from its own cell wall murein, and thus plays a role in cell wall recycling. The sequence is that of Anhydro-N-acetylmuramic acid kinase from Acidiphilium cryptum (strain JF-5).